The chain runs to 1121 residues: Transcription factor CSR2 (1121 aa).

Phosphoserine is present on residues serine 23, serine 46, and serine 127. Disordered stretches follow at residues proline 273–proline 342, histidine 513–leucine 532, leucine 579–methionine 600, and isoleucine 837–serine 860. Residues threonine 276–alanine 310 are compositionally biased toward polar residues. Composition is skewed to low complexity over residues asparagine 318 to alanine 329, serine 519 to proline 529, and asparagine 582 to glycine 597. Serine 327 carries the post-translational modification Phosphoserine. Residues isoleucine 837–valine 846 show a composition bias toward basic and acidic residues. Residue lysine 841 forms a Glycyl lysine isopeptide (Lys-Gly) (interchain with G-Cter in ubiquitin) linkage. Residues asparagine 847 to serine 860 show a composition bias toward polar residues. Serine 987 is modified (phosphoserine). Positions lysine 999–glycine 1009 are enriched in polar residues. 2 disordered regions span residues lysine 999–proline 1022 and threonine 1075–serine 1121. A compositionally biased stretch (low complexity) spans threonine 1084–asparagine 1093.

This sequence belongs to the CSR2 family. In terms of processing, phosphorylated by CDC28.

Its subcellular location is the cytoplasm. It is found in the nucleus. Transcription factor involved in the regulation of fermentation and aerobic oxidation. Acts as a repressor of CYC1, which is involved in electron flow through the mitochondria under aerobic condition. Required for pseudohyphal formation upon nitrogen starvation. May be involved in viability at stationary phase and aging. In Saccharomyces cerevisiae (strain ATCC 204508 / S288c) (Baker's yeast), this protein is Transcription factor CSR2 (CSR2).